A 53-amino-acid polypeptide reads, in one-letter code: Small ribosomal subunit protein uS14 (53 aa).

4 residues coordinate Zn(2+): Cys17, Cys20, Cys36, and Cys39.

The protein belongs to the universal ribosomal protein uS14 family. Zinc-binding uS14 subfamily. Part of the 30S ribosomal subunit. The cofactor is Zn(2+).

Binds 16S rRNA, required for the assembly of 30S particles. This is Small ribosomal subunit protein uS14 from Methanocaldococcus jannaschii (strain ATCC 43067 / DSM 2661 / JAL-1 / JCM 10045 / NBRC 100440) (Methanococcus jannaschii).